Here is a 125-residue protein sequence, read N- to C-terminus: Small ribosomal subunit protein uS13 (125 aa).

The segment at 91-125 (HRRGLPARGQRTRTNARTRKGKRKTVAGKKKAGKK) is disordered.

Belongs to the universal ribosomal protein uS13 family. As to quaternary structure, part of the 30S ribosomal subunit. Forms a loose heterodimer with protein S19. Forms two bridges to the 50S subunit in the 70S ribosome.

Located at the top of the head of the 30S subunit, it contacts several helices of the 16S rRNA. In the 70S ribosome it contacts the 23S rRNA (bridge B1a) and protein L5 of the 50S subunit (bridge B1b), connecting the 2 subunits; these bridges are implicated in subunit movement. Contacts the tRNAs in the A and P-sites. This chain is Small ribosomal subunit protein uS13, found in Chloroherpeton thalassium (strain ATCC 35110 / GB-78).